A 425-amino-acid polypeptide reads, in one-letter code: Histone-binding protein RBBP4 (425 aa).

Position 2 is an N-acetylalanine (A2). 7 WD repeats span residues 32–125 (YDLV…NHEG), 126–175 (EVNR…RLRG), 176–223 (HQKE…KTIF), 225–270 (GHTA…HSVD), 271–314 (AHTA…HSFE), 315–371 (SHKD…FIHG), and 372–404 (GHTA…VWQM). The interval 361-406 (DGPPELLFIHGGHTAKISDFSWNPNEPWVICSVSEDNIMQVWQMAE) is interaction with HAT1.

This sequence belongs to the WD repeat RBAP46/RBAP48/MSI1 family. As to quaternary structure, binds directly to histone H4, probably via helix 1 of the histone fold, a region that is not accessible when histone H4 is in chromatin. Interacts with CHAF1A, HDAC1, HDAC2, HDAC3 and HIRA. May also interact with HAT1.

It is found in the nucleus. The protein localises to the chromosome. The protein resides in the telomere. Its function is as follows. Core histone-binding subunit that may target chromatin assembly factors, chromatin remodeling factors and histone deacetylases to their histone substrates in a manner that is regulated by nucleosomal DNA. Component of several complexes which regulate chromatin metabolism. The sequence is that of Histone-binding protein RBBP4 (RBBP4) from Gallus gallus (Chicken).